A 173-amino-acid polypeptide reads, in one-letter code: Flagellar assembly factor FliW (173 aa).

The interval 152–173 (STTVRRKASPPAAGEDKGDVQE) is disordered.

This sequence belongs to the FliW family. In terms of assembly, interacts with translational regulator CsrA and flagellin(s).

The protein localises to the cytoplasm. Its function is as follows. Acts as an anti-CsrA protein, binds CsrA and prevents it from repressing translation of its target genes, one of which is flagellin. Binds to flagellin and participates in the assembly of the flagellum. This is Flagellar assembly factor FliW from Nitratidesulfovibrio vulgaris (strain ATCC 29579 / DSM 644 / CCUG 34227 / NCIMB 8303 / VKM B-1760 / Hildenborough) (Desulfovibrio vulgaris).